A 535-amino-acid polypeptide reads, in one-letter code: Peptide chain release factor 3 (535 aa).

Residues 8-276 (ARRRTFAIIS…ALVDLAPQPG (269 aa)) form the tr-type G domain. GTP is bound by residues 17–24 (SHPDAGKT), 85–89 (DTPGH), and 139–142 (NKMD).

The protein belongs to the TRAFAC class translation factor GTPase superfamily. Classic translation factor GTPase family. PrfC subfamily.

The protein localises to the cytoplasm. In terms of biological role, increases the formation of ribosomal termination complexes and stimulates activities of RF-1 and RF-2. It binds guanine nucleotides and has strong preference for UGA stop codons. It may interact directly with the ribosome. The stimulation of RF-1 and RF-2 is significantly reduced by GTP and GDP, but not by GMP. This chain is Peptide chain release factor 3, found in Bordetella avium (strain 197N).